The following is a 128-amino-acid chain: Large ribosomal subunit protein bL20 (128 aa).

Belongs to the bacterial ribosomal protein bL20 family.

Binds directly to 23S ribosomal RNA and is necessary for the in vitro assembly process of the 50S ribosomal subunit. It is not involved in the protein synthesizing functions of that subunit. The sequence is that of Large ribosomal subunit protein bL20 from Anaplasma marginale (strain Florida).